The chain runs to 23 residues: U22-ctenitoxin-Co1a (23 aa).

As to expression, expressed by the venom gland.

The protein resides in the secreted. This chain is U22-ctenitoxin-Co1a, found in Ctenus ornatus (Brazilian spider).